We begin with the raw amino-acid sequence, 277 residues long: Sulfur carrier protein FdhD (277 aa).

Cys-121 (cysteine persulfide intermediate) is an active-site residue. 260–265 (FCKPGR) is a binding site for Mo-bis(molybdopterin guanine dinucleotide).

This sequence belongs to the FdhD family.

Its subcellular location is the cytoplasm. Its function is as follows. Required for formate dehydrogenase (FDH) activity. Acts as a sulfur carrier protein that transfers sulfur from IscS to the molybdenum cofactor prior to its insertion into FDH. The sequence is that of Sulfur carrier protein FdhD from Shigella flexneri serotype 5b (strain 8401).